Consider the following 275-residue polypeptide: NAC domain-containing protein 2 (275 aa).

Residues 10–162 enclose the NAC domain; it reads LPPGFRFHPT…DWVLCRIYKK (153 aa). A DNA-binding region spans residues 107–168; the sequence is VGIKKALVFY…IYKKKNLERA (62 aa).

In terms of tissue distribution, expressed in roots, stem, flowers, and leaves.

The protein resides in the nucleus. Functionally, transcription factor that binds DNA motifs 5'-CGT[AG](5N)NACG[ACT][AC][AT][ACG][ACT]-3' and 5'-CACG[ACT][AC][AT][AGT][CT]-3' in target genes promoters. Promotes leaf senescence (developmental, light-induced and ABA-induced senescence) and regulates fruit yield and sugar content, probably by establishing abscisic acid (ABA) homeostasis. Activates the expression of senescence and ABA associated genes including NCED1, ABCG40, CYP707A2, SAG113, SGR1 and PAO, by directly binding to their promoters. The sequence is that of NAC domain-containing protein 2 from Solanum lycopersicum (Tomato).